A 365-amino-acid polypeptide reads, in one-letter code: Flagellar P-ring protein (365 aa).

The signal sequence occupies residues 1–19 (MIKFLSALILLLVITAAQA).

The protein belongs to the FlgI family. The basal body constitutes a major portion of the flagellar organelle and consists of four rings (L,P,S, and M) mounted on a central rod.

The protein localises to the periplasm. It localises to the bacterial flagellum basal body. In terms of biological role, assembles around the rod to form the L-ring and probably protects the motor/basal body from shearing forces during rotation. The chain is Flagellar P-ring protein from Escherichia coli O81 (strain ED1a).